Consider the following 194-residue polypeptide: dTTP/UTP pyrophosphatase (194 aa).

The Proton acceptor role is filled by D73.

Belongs to the Maf family. YhdE subfamily. The cofactor is a divalent metal cation.

It is found in the cytoplasm. It carries out the reaction dTTP + H2O = dTMP + diphosphate + H(+). The catalysed reaction is UTP + H2O = UMP + diphosphate + H(+). Its function is as follows. Nucleoside triphosphate pyrophosphatase that hydrolyzes dTTP and UTP. May have a dual role in cell division arrest and in preventing the incorporation of modified nucleotides into cellular nucleic acids. The protein is dTTP/UTP pyrophosphatase of Geotalea uraniireducens (strain Rf4) (Geobacter uraniireducens).